The following is a 770-amino-acid chain: Cyclopiane-type diterpene synthase (770 aa).

The tract at residues isoleucine 5–asparagine 335 is terpene cyclase. Aspartate 97 and aspartate 101 together coordinate Mg(2+). Residues aspartate 97, aspartate 101, arginine 190–aspartate 193, asparagine 234, serine 238–glutamate 242, and arginine 328–tyrosine 329 each bind substrate. A DDXXD 1 motif is present at residues aspartate 97 to aspartate 101. Residues asparagine 234–glutamate 242 carry the NSE/DTE motif. The tract at residues proline 336–leucine 720 is prenyltransferase. The disordered stretch occupies residues asparagine 371–threonine 397. Residues lysine 374 to threonine 383 are compositionally biased toward polar residues. Residues lysine 423, arginine 426, and histidine 455 each coordinate isopentenyl diphosphate. Mg(2+) contacts are provided by aspartate 462 and aspartate 466. The DDXXD 2 signature appears at aspartate 462 to aspartate 466. Arginine 471 contributes to the dimethylallyl diphosphate binding site. Arginine 472 serves as a coordination point for isopentenyl diphosphate. Positions 548, 549, 584, 591, 620, and 630 each coordinate dimethylallyl diphosphate.

This sequence in the N-terminal section; belongs to the terpene synthase family. In the C-terminal section; belongs to the FPP/GGPP synthase family. Hexamer. Requires Mg(2+) as cofactor.

The enzyme catalyses isopentenyl diphosphate + (2E,6E)-farnesyl diphosphate = (2E,6E,10E)-geranylgeranyl diphosphate + diphosphate. It catalyses the reaction (2E,6E,10E)-geranylgeranyl diphosphate + H2O = (+)-penichrysol + diphosphate. The protein operates within secondary metabolite biosynthesis; terpenoid biosynthesis. Bifunctional terpene synthase converts dimethylallyl diphosphate (DMAPP) and isopentenyl diphosphate (IPP) into a cyclopiane-type diterpene. The C-terminal prenyltransferase (PT) domain of PcCS catalyzes formation of geranylgeranyl pyrophosphate (GGPP), whereas the N-terminal terpene cyclase (TC) domain catalyzes the cyclization of GGPP to the cyclopiane-type diterpene penichrysol. This Penicillium chrysogenum (Penicillium notatum) protein is Cyclopiane-type diterpene synthase.